The following is a 427-amino-acid chain: Chitin disaccharide deacetylase (427 aa).

An N-terminal signal peptide occupies residues 1–22 (MKLNKLAIATLVSAALSQYAFA). One can recognise a NodB homology domain in the interval 28–326 (GTIYLTFDDG…LAKQAGYVFD (299 aa)). Chitin-binding type-3 domains follow at residues 333-375 (PNWQ…SSLW) and 382-419 (TNWT…TPNS).

Belongs to the polysaccharide deacetylase family. Carbohydrate-binding module 12 subfamily.

It catalyses the reaction N,N'-diacetylchitobiose + H2O = N-acetyl-beta-D-glucosaminyl-(1-&gt;4)-D-glucosamine + acetate. It participates in glycan degradation; chitin degradation. In terms of biological role, specifically catalyzes the degradation of N,N'-diacetylchitobiose. Key enzyme in the chitin catabolic cascade. This chain is Chitin disaccharide deacetylase (deaA), found in Vibrio alginolyticus.